Here is a 61-residue protein sequence, read N- to C-terminus: ATP synthase F(0) complex subunit 8 (61 aa).

Residues 10-32 (FMILSSTWLIYTIILQPKILSHL) traverse the membrane as a helical segment.

Belongs to the ATPase protein 8 family. Component of the ATP synthase complex composed at least of ATP5F1A/subunit alpha, ATP5F1B/subunit beta, ATP5MC1/subunit c (homooctomer), MT-ATP6/subunit a, MT-ATP8/subunit 8, ATP5ME/subunit e, ATP5MF/subunit f, ATP5MG/subunit g, ATP5MK/subunit k, ATP5MJ/subunit j, ATP5F1C/subunit gamma, ATP5F1D/subunit delta, ATP5F1E/subunit epsilon, ATP5PF/subunit F6, ATP5PB/subunit b, ATP5PD/subunit d, ATP5PO/subunit OSCP. ATP synthase complex consists of a soluble F(1) head domain (subunits alpha(3) and beta(3)) - the catalytic core - and a membrane F(0) domain - the membrane proton channel (subunits c, a, 8, e, f, g, k and j). These two domains are linked by a central stalk (subunits gamma, delta, and epsilon) rotating inside the F1 region and a stationary peripheral stalk (subunits F6, b, d, and OSCP).

The protein localises to the mitochondrion membrane. In terms of biological role, subunit 8, of the mitochondrial membrane ATP synthase complex (F(1)F(0) ATP synthase or Complex V) that produces ATP from ADP in the presence of a proton gradient across the membrane which is generated by electron transport complexes of the respiratory chain. ATP synthase complex consist of a soluble F(1) head domain - the catalytic core - and a membrane F(1) domain - the membrane proton channel. These two domains are linked by a central stalk rotating inside the F(1) region and a stationary peripheral stalk. During catalysis, ATP synthesis in the catalytic domain of F(1) is coupled via a rotary mechanism of the central stalk subunits to proton translocation. In vivo, can only synthesize ATP although its ATP hydrolase activity can be activated artificially in vitro. Part of the complex F(0) domain. The protein is ATP synthase F(0) complex subunit 8 of Chelonia mydas (Green sea-turtle).